A 212-amino-acid chain; its full sequence is Methylthioribulose-1-phosphate dehydratase (212 aa).

Positions 99 and 101 each coordinate Zn(2+).

Belongs to the aldolase class II family. MtnB subfamily. Homotetramer. It depends on Zn(2+) as a cofactor.

The enzyme catalyses 5-(methylsulfanyl)-D-ribulose 1-phosphate = 5-methylsulfanyl-2,3-dioxopentyl phosphate + H2O. It participates in amino-acid biosynthesis; L-methionine biosynthesis via salvage pathway; L-methionine from S-methyl-5-thio-alpha-D-ribose 1-phosphate: step 2/6. Its function is as follows. Catalyzes the dehydration of methylthioribulose-1-phosphate (MTRu-1-P) into 2,3-diketo-5-methylthiopentyl-1-phosphate (DK-MTP-1-P). This Bacillus pumilus (strain SAFR-032) protein is Methylthioribulose-1-phosphate dehydratase.